Here is a 1657-residue protein sequence, read N- to C-terminus: MGDAAAAAPAAAAAGPSSTRGEPKDPRTIARKYQLDLCKRAVEENIIVYLGTGCGKTHIAVLLIYELGHLIRKPSREVCIFLAPTIPLVRQQAVVIASSTDFKVQCYYGNGKNSRDHQEWENDMREFEVLVMTPQILLQSLRHCFIKMNSIALLILDECHHAQPQKRHPYAQIMKEFYNSNSVEKFPRVFGMTASPIIGKGVMPSHSFTEKGGRSPCQPLIFFLPKGGSNKLNYTKCINSLEELLHAKVCSVDNEELESVVASPDMEVYFYGPVNHSNLTTICIKELDSLKLQSERMLRASLCDFKDSQKKLKSLWRLHENIIFCLQELGSFGALQAARTFLSFDGDKLDRREVDLNGSTSSFAHHYLNGATSILSRNKTDGSHAGSFDLEKLEEPFFSNKFSVLINVLSRYGLQENMKCIVFVKRITVARAISNILQNLKCLEFWKCEFLVGCHSGSKNMSRNKMDAIVQRFSSGEVNLLVATSVGEEGLDIQTCCLVVRFDLPETVASFIQSRGRARMTKSKYVVLLERENQSHEKLLNGYIAGESIMNEEIDSRTSNDMFDCLEENIYQVDNTGASISTACSVSLLHCYCDNLPRDMFFTPSPVFFYIDGIEGIICRLILPPNAAFRQADGQPCLSKDEAKRDACLKACVKLHKLGALTDFLLPGPGSRKNKVSVTNNSSNNKVEDDSLREELHEMLIPAVLKPSGLKLDSLSNLHFYYVKFIPIPEDRRYQMFGLFVINPLPVEAETLQVDLHLARGRIVKAGIKHLGKIAFEKEKMMLAHKFQEMCLKILLDRSEFTSPHVKLGNDVTLEINSTFYLLLPIKQKCYGDRFMIDWPAVERCLSSPIFKDPIDVSVHASYSSNESLRLLDGIFSKTDVVGSVVFSPHNNIFFFVDGILDEINAWSEHSGATYAEHFKERFRIELSHPEQPLLKAKQIFNLRNLLHNRLPETTESEGRELLEHFVELPPELCSLKVIGFSKDMGSSLSLLPSLMYRLENLLVAIELKDVMLSSFPEASQISASGILEALTTEKCLERISLERFEVLGDAFLKYVVGRHKFITYEGLDEGQLTRRRSDVVNNSHLYELSIRKKLQVYIRDQQFEPTQFFAPGRPCKVVCNTDVEVRLHQMDIHPDNRENCNLRCTRSHHWLHRKVIADVVESLIGAFLVEGGFKAAFAFLHWIGIDVDFNNPALYRVLDSSSINLSLMDYTDIAGLEELIGYKFKHKGLLLQAFVHPSFSQHSGGCYQRLEFLGDAVLEYVITSYLYSTYPDIKPGQITDLRSLAVGNDSLAYAAVEKSIHKHLIKDSNHLTSAISKFEMYVKLSNSEKDLLEEPACPKALGDIVESCIGAVLLDSGFNLNYVWKVMLMLLKPVLTFANMHTNPMRELRELCQCHGFELGLPKPMKADGEYHVKVEVNIKSKIIICTAANRNSKAARKFAAQETLSKLKNYGYKHRNKSLEEILIVARKRESELIGYNEDPIDVEADISVKMKSPHIHEENIPFQNTETSFTRSSKFHNQIIAGSGKHDVNNGRNNQPKLATQSGRLPSEATEKSNKKVYHGDMVHKTARSFLFELCAANYWKPPEFKLCKEEGPSHLRKFTYKVVVEIKGASATLLECHSDGKLQKKAAQEHAAQGALWCLKQLGHLPKEEDVRV.

The span at 1–14 (MGDAAAAAPAAAAA) shows a compositional bias: low complexity. The interval 1-26 (MGDAAAAAPAAAAAGPSSTRGEPKDP) is disordered. One can recognise a Helicase ATP-binding domain in the interval 37 to 214 (LCKRAVEENI…SHSFTEKGGR (178 aa)). Residue 50-57 (LGTGCGKT) participates in ATP binding. The short motif at 157–160 (DECH) is the DECH box element. A Helicase C-terminal domain is found at 400–567 (NKFSVLINVL…TSNDMFDCLE (168 aa)). The Dicer dsRNA-binding fold domain maps to 585–675 (SVSLLHCYCD…LPGPGSRKNK (91 aa)). In terms of domain architecture, PAZ spans 856–978 (DVSVHASYSS…LPPELCSLKV (123 aa)). 2 consecutive RNase III domains span residues 1010 to 1173 (DVML…VEGG) and 1214 to 1358 (IAGL…LDSG). Mg(2+) contacts are provided by Glu1252, Asp1344, and Glu1347. Residues 1384–1451 (NPMRELRELC…AQETLSKLKN (68 aa)) form the DRBM 1 domain. Residues 1525 to 1556 (GSGKHDVNNGRNNQPKLATQSGRLPSEATEKS) form a disordered region. A compositionally biased stretch (polar residues) spans 1533 to 1547 (NGRNNQPKLATQSGR). One can recognise a DRBM 2 domain in the interval 1569–1645 (TARSFLFELC…AQGALWCLKQ (77 aa)).

This sequence belongs to the helicase family. Dicer subfamily. In terms of assembly, may interact with ARGONAUTE1 or PINHEAD through their common PAZ domains. Mg(2+) serves as cofactor. It depends on Mn(2+) as a cofactor. Expressed in roots, leaf blades, leaf sheaths, shoot apices and spikelets.

The protein localises to the nucleus. In terms of biological role, involved in the RNA silencing pathway. Cleaves double-stranded RNA to produce small interfering RNAs (siRNAs) which target the selective destruction of complementary RNAs. Required for the production of 21 nucleotide siRNAs. Regulates shoot apical meristem (SAM) initiation and maintenance, leaf polarization and lemma polarity through the trans-acting siRNAS (ta-siRNAs) pathway, which probably modulate the expression of the ARF2, ARF3, ARF4, ARF14 and ARF15 genes. Can process endogenous 21 nucleotide siRNAs derived from an imperfect inverted repeat. May not be involved in microRNAs (miRNAs) production. This Oryza sativa subsp. japonica (Rice) protein is Endoribonuclease Dicer homolog 4 (DCL4).